The chain runs to 472 residues: Probable glycine dehydrogenase (decarboxylating) subunit 2 (472 aa).

Residue K268 is modified to N6-(pyridoxal phosphate)lysine.

Belongs to the GcvP family. C-terminal subunit subfamily. In terms of assembly, the glycine cleavage system is composed of four proteins: P, T, L and H. In this organism, the P 'protein' is a heterodimer of two subunits. The cofactor is pyridoxal 5'-phosphate.

It carries out the reaction N(6)-[(R)-lipoyl]-L-lysyl-[glycine-cleavage complex H protein] + glycine + H(+) = N(6)-[(R)-S(8)-aminomethyldihydrolipoyl]-L-lysyl-[glycine-cleavage complex H protein] + CO2. The glycine cleavage system catalyzes the degradation of glycine. The P protein binds the alpha-amino group of glycine through its pyridoxal phosphate cofactor; CO(2) is released and the remaining methylamine moiety is then transferred to the lipoamide cofactor of the H protein. This chain is Probable glycine dehydrogenase (decarboxylating) subunit 2, found in Thermoplasma volcanium (strain ATCC 51530 / DSM 4299 / JCM 9571 / NBRC 15438 / GSS1).